The sequence spans 151 residues: Large ribosomal subunit protein bL9 (151 aa).

It belongs to the bacterial ribosomal protein bL9 family.

Functionally, binds to the 23S rRNA. The sequence is that of Large ribosomal subunit protein bL9 from Francisella tularensis subsp. novicida (strain U112).